The chain runs to 527 residues: GMP synthase [glutamine-hydrolyzing] (527 aa).

Positions 13-202 (TILVLDFGSQ…AVDICGAAQK (190 aa)) constitute a Glutamine amidotransferase type-1 domain. Cys89 functions as the Nucleophile in the catalytic mechanism. Active-site residues include His176 and Glu178. The region spanning 203–402 (WSMENFVDTE…MGIPHDLVWR (200 aa)) is the GMPS ATP-PPase domain. Residue 231–237 (SGGVDST) participates in ATP binding. 4 residues coordinate XMP: Arg304, Asp464, Lys519, and Glu525.

Homodimer. It depends on Mg(2+) as a cofactor.

It localises to the cytoplasm. It is found in the cytosol. It catalyses the reaction XMP + L-glutamine + ATP + H2O = GMP + L-glutamate + AMP + diphosphate + 2 H(+). Its pathway is purine metabolism; GMP biosynthesis; GMP from XMP (L-Gln route): step 1/1. In terms of biological role, catalyzes the conversion of xanthine monophosphate (XMP) to GMP in the presence of glutamine and ATP through an adenyl-XMP intermediate. In Yarrowia lipolytica (strain CLIB 122 / E 150) (Yeast), this protein is GMP synthase [glutamine-hydrolyzing] (GUA1).